A 1085-amino-acid polypeptide reads, in one-letter code: Solute carrier family 12 member 4 (1085 aa).

The Cytoplasmic segment spans residues M1–G119. S24 carries the post-translational modification Phosphoserine. Over residues Y28–S46 the composition is skewed to basic and acidic residues. The disordered stretch occupies residues Y28–S47. S47, S59, S81, and S88 each carry phosphoserine. A discontinuously helical membrane pass occupies residues T120–L141. K(+)-binding residues include N131 and I132. The Extracellular segment spans residues T142 to G149. A helical transmembrane segment spans residues V150–S172. At A173–E196 the chain is on the cytoplasmic side. Residues F197–L225 traverse the membrane as a helical segment. Residue Y216 participates in K(+) binding. Topologically, residues T226 to L248 are extracellular. Residue N245 is glycosylated (N-linked (GlcNAc...) asparagine). 2 helical membrane-spanning segments follow: residues N249–K271 and Y272–K297. At S298–S419 the chain is on the extracellular side. Residues C308 and C323 are joined by a disulfide bond. N-linked (GlcNAc...) asparagine glycosylation is found at N312, N331, and N347. An intrachain disulfide couples C343 to C353. A helical membrane pass occupies residues F420–R440. K(+) is bound by residues P429 and T432. The chloride site is built by G433, I434, and M435. Residues S441–S450 lie on the Cytoplasmic side of the membrane. A helical membrane pass occupies residues I451–F473. Over G474–P504 the chain is Extracellular. A helical membrane pass occupies residues W505–Q531. Topologically, residues A532 to P554 are cytoplasmic. The next 2 helical transmembrane spans lie at T555–D575 and M576–V598. Y589 contacts chloride. Over Q599–K612 the chain is Cytoplasmic. Transmembrane regions (helical) follow at residues Y613 to W635 and Y636 to Y651. Topologically, residues I652–S1085 are cytoplasmic. Residues I665–E681 form a scissor helix region. ATP-binding residues include L697, K699, K707, Y708, and V730. S734 bears the Phosphoserine mark. G794, W795, and Y797 together coordinate ATP. Residues S916 and S967 each carry the phosphoserine modification. The residue at position 983 (T983) is a Phosphothreonine. S1050 carries the post-translational modification Phosphoserine.

It belongs to the SLC12A transporter family. K/Cl co-transporter subfamily. In terms of assembly, homodimer; adopts a domain-swap conformation at the scissor helices connecting the transmembrane domain and C-terminal domain. Heterodimer with other K-Cl cotransporters. N-glycosylated. In terms of processing, phosphorylated, phosphorylation may regulate transporter activity.

The protein localises to the cell membrane. The enzyme catalyses K(+)(in) + chloride(in) = K(+)(out) + chloride(out). Its activity is regulated as follows. Inhibited by WNK3. Its function is as follows. Mediates electroneutral potassium-chloride cotransport when activated by cell swelling. May contribute to cell volume homeostasis in single cells. May be involved in the regulation of basolateral Cl(-) exit in NaCl absorbing epithelia. The polypeptide is Solute carrier family 12 member 4 (SLC12A4) (Oryctolagus cuniculus (Rabbit)).